A 453-amino-acid polypeptide reads, in one-letter code: Dibenzothiophene-sulfone monooxygenase (453 aa).

The FMN site is built by D59, T106, H156, Y160, and S231.

Belongs to the NtaA/SnaA/DszA monooxygenase family. In terms of assembly, homodimer.

The protein resides in the cytoplasm. The enzyme catalyses dibenzothiophene 5,5-dioxide + FMNH2 + NADH + O2 = 2'-hydroxybiphenyl-2-sulfinate + FMN + NAD(+) + H2O + H(+). The protein operates within sulfur metabolism; dibenzothiophene degradation. Catalyzes the second step of the '4S' desulfurization pathway that removes covalently bound sulfur from dibenzothiophene (DBT) without breaking carbon-carbon bonds. Metabolizes DBT-sulfone (DBTO2 or DBT 5,5-dioxide) to 2-(2'-hydroxyphenyl)benzene sulphinate (HBPS). The polypeptide is Dibenzothiophene-sulfone monooxygenase (Rhodococcus erythropolis (Arthrobacter picolinophilus)).